Consider the following 153-residue polypeptide: MYAVVRLRGQVNVRYTIEDTMKMLRLHKVNHCVFLPENPHYKGMVQKVKDYVAYGKIDAKTLAEVLENRGRLEGDARLTEEYIRENTDYDSIKAFAEAVVEGKASLKDVPKLKPVFRLHPPRKGHAGIKRTVQQGGVLGNHEENINVLLHKMR.

This sequence belongs to the universal ribosomal protein uL30 family. In terms of assembly, part of the 50S ribosomal subunit.

This Methanosarcina mazei (strain ATCC BAA-159 / DSM 3647 / Goe1 / Go1 / JCM 11833 / OCM 88) (Methanosarcina frisia) protein is Large ribosomal subunit protein uL30.